The following is a 70-amino-acid chain: Conotoxin Cl6.13 (70 aa).

Positions 1–21 are cleaved as a signal peptide; the sequence is MKFPLLFISLALAAFLTRVQD. Positions 22-33 are excised as a propeptide; it reads ADSSVISKEKSV. 3 disulfide bridges follow: Cys-41/Cys-58, Cys-48/Cys-63, and Cys-57/Cys-68.

As to expression, expressed by the venom duct.

The protein resides in the secreted. The protein is Conotoxin Cl6.13 of Californiconus californicus (California cone).